Consider the following 683-residue polypeptide: DNA polymerase alpha-associated DNA helicase A (683 aa).

229 to 236 (GPPGTGKT) serves as a coordination point for ATP.

It belongs to the DNA2/NAM7 helicase family. Associates with the hexameric DNA polymerase alpha.

The protein localises to the cytoplasm. The protein resides in the nucleus. The catalysed reaction is ATP + H2O = ADP + phosphate + H(+). DNA polymerase alpha-associated DNA helicase which may be involved in DNA replication. This Saccharomyces cerevisiae (strain ATCC 204508 / S288c) (Baker's yeast) protein is DNA polymerase alpha-associated DNA helicase A (HCS1).